Here is a 110-residue protein sequence, read N- to C-terminus: Large ribosomal subunit protein uL22 (110 aa).

It belongs to the universal ribosomal protein uL22 family. Part of the 50S ribosomal subunit.

This protein binds specifically to 23S rRNA; its binding is stimulated by other ribosomal proteins, e.g. L4, L17, and L20. It is important during the early stages of 50S assembly. It makes multiple contacts with different domains of the 23S rRNA in the assembled 50S subunit and ribosome. In terms of biological role, the globular domain of the protein is located near the polypeptide exit tunnel on the outside of the subunit, while an extended beta-hairpin is found that lines the wall of the exit tunnel in the center of the 70S ribosome. This is Large ribosomal subunit protein uL22 from Saccharophagus degradans (strain 2-40 / ATCC 43961 / DSM 17024).